Consider the following 216-residue polypeptide: Large ribosomal subunit protein bL25 (216 aa).

Residues 191–216 form a disordered region; that stretch reads LVSAESEEDEDAPAADEVPATEVSEE. Residues 195-204 show a composition bias toward acidic residues; it reads ESEEDEDAPA.

It belongs to the bacterial ribosomal protein bL25 family. CTC subfamily. Part of the 50S ribosomal subunit; part of the 5S rRNA/L5/L18/L25 subcomplex. Contacts the 5S rRNA. Binds to the 5S rRNA independently of L5 and L18.

This is one of the proteins that binds to the 5S RNA in the ribosome where it forms part of the central protuberance. The protein is Large ribosomal subunit protein bL25 of Jannaschia sp. (strain CCS1).